The chain runs to 424 residues: Adenylosuccinate synthetase (424 aa).

GTP contacts are provided by residues 12–18 (GDEGKGK) and 40–42 (GHT). The active-site Proton acceptor is the aspartate 13. Positions 13 and 40 each coordinate Mg(2+). IMP is bound by residues 13 to 16 (DEGK), 38 to 41 (NAGH), threonine 130, arginine 144, asparagine 220, threonine 235, and arginine 299. Histidine 41 functions as the Proton donor in the catalytic mechanism. 295–301 (VTTGRKR) is a binding site for substrate. GTP contacts are provided by residues arginine 301, 327–329 (KLD), and 412–414 (GTG).

Belongs to the adenylosuccinate synthetase family. As to quaternary structure, homodimer. Requires Mg(2+) as cofactor.

The protein resides in the cytoplasm. It catalyses the reaction IMP + L-aspartate + GTP = N(6)-(1,2-dicarboxyethyl)-AMP + GDP + phosphate + 2 H(+). It functions in the pathway purine metabolism; AMP biosynthesis via de novo pathway; AMP from IMP: step 1/2. In terms of biological role, plays an important role in the de novo pathway and in the salvage pathway of purine nucleotide biosynthesis. Catalyzes the first committed step in the biosynthesis of AMP from IMP. The chain is Adenylosuccinate synthetase (adB) from Emericella nidulans (strain FGSC A4 / ATCC 38163 / CBS 112.46 / NRRL 194 / M139) (Aspergillus nidulans).